Consider the following 365-residue polypeptide: Chorismate synthase (365 aa).

2 residues coordinate NADP(+): arginine 48 and arginine 54. Residues 131–133 (RSS), 243–244 (NA), glycine 288, 303–307 (KPTSS), and arginine 329 contribute to the FMN site.

It belongs to the chorismate synthase family. As to quaternary structure, homotetramer. The cofactor is FMNH2.

It carries out the reaction 5-O-(1-carboxyvinyl)-3-phosphoshikimate = chorismate + phosphate. It functions in the pathway metabolic intermediate biosynthesis; chorismate biosynthesis; chorismate from D-erythrose 4-phosphate and phosphoenolpyruvate: step 7/7. Functionally, catalyzes the anti-1,4-elimination of the C-3 phosphate and the C-6 proR hydrogen from 5-enolpyruvylshikimate-3-phosphate (EPSP) to yield chorismate, which is the branch point compound that serves as the starting substrate for the three terminal pathways of aromatic amino acid biosynthesis. This reaction introduces a second double bond into the aromatic ring system. This chain is Chorismate synthase, found in Agrobacterium fabrum (strain C58 / ATCC 33970) (Agrobacterium tumefaciens (strain C58)).